The following is a 440-amino-acid chain: Probable exopolygalacturonase B (440 aa).

Positions 1 to 20 (MRLHFLPLVALCATTASSLA) are cleaved as a signal peptide. Residues N65, N190, and N230 are each glycosylated (N-linked (GlcNAc...) asparagine). D260 functions as the Proton donor in the catalytic mechanism. C262 and C279 are disulfide-bonded. Residues N268 and N280 are each glycosylated (N-linked (GlcNAc...) asparagine). Residue H283 is part of the active site. 3 N-linked (GlcNAc...) asparagine glycosylation sites follow: N307, N334, and N371. C397 and C403 form a disulfide bridge. The N-linked (GlcNAc...) asparagine glycan is linked to N412.

This sequence belongs to the glycosyl hydrolase 28 family.

The protein localises to the secreted. It carries out the reaction [(1-&gt;4)-alpha-D-galacturonosyl](n) + H2O = alpha-D-galacturonate + [(1-&gt;4)-alpha-D-galacturonosyl](n-1). Functionally, specific in hydrolyzing the terminal glycosidic bond of polygalacturonic acid and oligogalacturonates. The protein is Probable exopolygalacturonase B (pgxB) of Emericella nidulans (strain FGSC A4 / ATCC 38163 / CBS 112.46 / NRRL 194 / M139) (Aspergillus nidulans).